The primary structure comprises 1034 residues: AP-3 complex subunit delta (1034 aa).

HEAT repeat units lie at residues 35–72 (KYIS…LGYD), 143–180 (DLSR…RYPE), 181–217 (ALRP…KNPK), 219–255 (YLPL…LEPR), 258–297 (KKLI…GMPN), 299–337 (SASI…THPK), 338–374 (SVQA…KKNL), 376–414 (EIVK…LYVT), 415–452 (NFEW…RVPV), and 570–609 (NSAC…EIVQ). Disordered regions lie at residues 637 to 660 (DLDE…EHDK), 669 to 688 (QAGT…ELTP), 701 to 723 (EQSN…NADQ), and 758 to 1034 (QEQQ…KEIL). Residue S683 is modified to Phosphoserine. Phosphothreonine is present on T687. Residues 769-784 (GKKKHKKGKKSKKAKN) show a composition bias toward basic residues. 2 stretches are compositionally biased toward basic and acidic residues: residues 822-836 (KDGK…RALD) and 882-906 (KDKD…RKEA). Residues 928-942 (SATSNNNNTSTVLPD) show a composition bias toward low complexity. Over residues 986 to 1003 (KVHKKKHKKEKSQRKEKK) the composition is skewed to basic residues. Residues 1007 to 1016 (ESASVSAIVS) are compositionally biased toward low complexity. A compositionally biased stretch (polar residues) spans 1025–1034 (GISTPSKEIL).

Belongs to the adaptor complexes large subunit family. Adaptor protein complex 3 (AP-3) is a heterotetramer composed of two large chains (delta and beta3), a medium chain (mu3) and a small chain (sigma3).

The protein resides in the cytoplasmic vesicle. Its subcellular location is the clathrin-coated vesicle membrane. It is found in the golgi apparatus. Part of the AP-3 complex, an adapter-related complex which is not clathrin-associated. The complex is associated with the Golgi region as well as more peripheral structures. It facilitates the budding of vesicles from the Golgi membrane and may be directly involved in trafficking to lysosomes. Its function is as follows. May be a coat protein involved in the formation of specialized structures like pigment granules. The chain is AP-3 complex subunit delta (g) from Drosophila melanogaster (Fruit fly).